The chain runs to 274 residues: Aspartate/glutamate leucyltransferase (274 aa).

Belongs to the R-transferase family. Bpt subfamily.

It localises to the cytoplasm. The enzyme catalyses N-terminal L-glutamyl-[protein] + L-leucyl-tRNA(Leu) = N-terminal L-leucyl-L-glutamyl-[protein] + tRNA(Leu) + H(+). The catalysed reaction is N-terminal L-aspartyl-[protein] + L-leucyl-tRNA(Leu) = N-terminal L-leucyl-L-aspartyl-[protein] + tRNA(Leu) + H(+). Its function is as follows. Functions in the N-end rule pathway of protein degradation where it conjugates Leu from its aminoacyl-tRNA to the N-termini of proteins containing an N-terminal aspartate or glutamate. This is Aspartate/glutamate leucyltransferase from Ruegeria sp. (strain TM1040) (Silicibacter sp.).